The primary structure comprises 143 residues: Sirohydrochlorin cobaltochelatase (143 aa).

Histidine 9 acts as the Proton acceptor in catalysis. Residue histidine 9 coordinates Co(2+). Histidine 9 is a Ni(2+) binding site. Residues glutamate 45 and 70-75 (LAHGVH) each bind substrate. Histidine 75 is a Co(2+) binding site. Histidine 75 contacts Ni(2+).

This sequence belongs to the CbiX family. CbiXS subfamily. As to quaternary structure, homotetramer; dimer of dimers.

It catalyses the reaction Co-sirohydrochlorin + 2 H(+) = sirohydrochlorin + Co(2+). The catalysed reaction is Ni-sirohydrochlorin + 2 H(+) = sirohydrochlorin + Ni(2+). Its pathway is cofactor biosynthesis; adenosylcobalamin biosynthesis; cob(II)yrinate a,c-diamide from sirohydrochlorin (anaerobic route): step 1/10. In terms of biological role, catalyzes the insertion of Co(2+) into sirohydrochlorin as part of the anaerobic pathway to cobalamin biosynthesis. Involved in the biosynthesis of the unique nickel-containing tetrapyrrole coenzyme F430, the prosthetic group of methyl-coenzyme M reductase (MCR), which plays a key role in methanogenesis and anaerobic methane oxidation. Catalyzes the insertion of Ni(2+) into sirohydrochlorin to yield Ni-sirohydrochlorin. The sequence is that of Sirohydrochlorin cobaltochelatase from Methanopyrus kandleri (strain AV19 / DSM 6324 / JCM 9639 / NBRC 100938).